A 287-amino-acid polypeptide reads, in one-letter code: Uroplakin-3a (287 aa).

The signal sequence occupies residues 1 to 18; sequence MPPLWVVLALGCLRLGSG. The Lumenal segment spans residues 19-207; it reads VNLQPQLASV…DTWPGRRSGG (189 aa). N-linked (GlcNAc...) asparagine glycosylation is found at asparagine 74, asparagine 139, and asparagine 170. The chain crosses the membrane as a helical span at residues 208–235; that stretch reads MIVITSILGSLPFFLLIGFAGAIVLSLV. Over 236-287 the chain is Cytoplasmic; sequence DRGDADGATSHDSQITQEAVPKSLGTSEPSYTSVNRGPSLDRAEVYASKLQD. The segment at 243–274 is disordered; it reads ATSHDSQITQEAVPKSLGTSEPSYTSVNRGPS. Residues 259–271 are compositionally biased toward polar residues; it reads LGTSEPSYTSVNR.

This sequence belongs to the uroplakin-3 family. In terms of assembly, heterodimer with uroplakin-1B (UPK1B). In terms of tissue distribution, bladder epithelium.

The protein resides in the endoplasmic reticulum membrane. In terms of biological role, component of the asymmetric unit membrane (AUM); a highly specialized biomembrane elaborated by terminally differentiated urothelial cells. May play an important role in AUM-cytoskeleton interaction in terminally differentiated urothelial cells. It also contributes to the formation of urothelial glycocalyx which may play an important role in preventing bacterial adherence. This Bos taurus (Bovine) protein is Uroplakin-3a (UPK3A).